We begin with the raw amino-acid sequence, 902 residues long: AAA+ ATPase ClpV1 (902 aa).

Residues 10–151 (FGKLNSLAYK…KVEALTERFD (142 aa)) form the Clp R domain. Repeat stretches follow at residues 13-78 (LNSL…LDRL) and 88-151 (LSSH…ERFD). ATP is bound at residue 237 to 244 (GEAGVGKT). Positions 441 to 559 (AEVDDSRRRI…AQLSALQGEE (119 aa)) form a coiled coil. 640 to 647 (GTSGVGKT) lines the ATP pocket.

This sequence belongs to the ClpA/ClpB family. In terms of assembly, interacts with TagJ.

The protein resides in the cytoplasm. Functionally, component of the H1 type VI (H1-T6SS) secretion system that plays a role in the release of toxins targeting both eukaryotic and prokaryotic species. Acts as an AAA(+) ATPase that disassembles the contracted sheath, which resets the systems for reassembly of an extended sheath that is ready to fire again. This is AAA+ ATPase ClpV1 (clpV1) from Pseudomonas aeruginosa (strain ATCC 15692 / DSM 22644 / CIP 104116 / JCM 14847 / LMG 12228 / 1C / PRS 101 / PAO1).